The sequence spans 95 residues: Small ribosomal subunit protein bS6 (95 aa).

The protein belongs to the bacterial ribosomal protein bS6 family.

Binds together with bS18 to 16S ribosomal RNA. This Bacillus cytotoxicus (strain DSM 22905 / CIP 110041 / 391-98 / NVH 391-98) protein is Small ribosomal subunit protein bS6.